We begin with the raw amino-acid sequence, 181 residues long: Immunity-related GTPase family M protein (181 aa).

The IRG-type G domain occupies T32 to Y181. Residues D41–T48, T66–K70, and K147–D149 each bind GTP.

Belongs to the TRAFAC class dynamin-like GTPase superfamily. IRG family. Interacts with ULK1; promoting the coassembly of ULK1 and BECN1. Interacts with BECN1; enhancing BECN1-interacting partners and influencing the composition of the BECN1 complex. Interacts with ATG16L1. Interacts with NOD2; promoting IRGM 'Lys-63'-linked polyubiquitination, which is required for interactions with the core autophagy factors. Interacts with STX17; promoting STX17 recruitment to autophagosomes. Interacts with ATG8 proteins (GABARAP, GABARAPL1, GABARAPL2, MAP1LC3A, MAP1LC3B and MAP1LC3C); promoting STX17 recruitment to autophagosomes. Interacts with TFEB; promoting association between TFEB and PPP3CB and TFEB dephosphorylation. Interacts with PPP3CB; promoting association between TFEB and PPP3CB and TFEB dephosphorylation. Interacts with NLRP3; preventing NLRP3 inflammasome assembly and promoting SQSTM1/p62-dependent autophagic degradation of NLRP3. Interacts with CGAS; promoting SQSTM1/p62-dependent autophagic degradation of CGAS. Interacts with RIGI/RIG-I; promoting SQSTM1/p62-dependent autophagic degradation of RIGI/RIG-I. Interacts with NOD1; promoting SQSTM1/p62-dependent autophagic degradation of RIGI/RIG-I. Interacts with NOD2; promoting SQSTM1/p62-dependent autophagic degradation of RIGI/RIG-I. Interacts with RIPK2; promoting SQSTM1/p62-dependent autophagic degradation of RIGI/RIG-I. Post-translationally, ubiquitinated via 'Lys-63'-linked polyubiquitination in a NOD2-dependent process. 'Lys-63'-linked polyubiquitination is required for interactions with the core autophagy factors. In terms of tissue distribution, widely expressed (at protein level). Expressed in several tissues including colon, small bowel and peripheral blood leukocytes.

It is found in the golgi apparatus membrane. Its subcellular location is the cell membrane. It localises to the cytoplasmic vesicle. The protein localises to the phagosome membrane. The protein resides in the autophagosome membrane. It is found in the lysosome membrane. Its subcellular location is the late endosome membrane. It localises to the mitochondrion membrane. The protein localises to the cell projection. The protein resides in the phagocytic cup. It is found in the mitochondrion. It carries out the reaction GTP + H2O = GDP + phosphate + H(+). Functionally, immunity-related GTPase that plays important roles in innate immunity and inflammatory response. Acts as a dynamin-like protein that binds to intracellular membranes and promotes remodeling and trafficking of those membranes. Required for clearance of acute protozoan and bacterial infections by interacting with autophagy and lysosome regulatory proteins, thereby promoting the fusion of phagosomes with lysosomes for efficient degradation of cargo including microbes. Regulates selective autophagy, including xenophagy and mitophagy, both directly and indirectly. Directly regulates autophagy by acting as a molecular adapter that promotes the coassembly of the core autophagy machinery to mediate antimicrobial defense: IRGM (1) activates AMPK, which in turn phosphorylates ULK1 and BECN1 to induce autophagy, (2) promotes the coassembly of ULK1 and BECN1, enhancing BECN1-interacting partners and (3) influences the composition of the BECN1 complex, by competing with the negative regulators BCL2 and RUBCN, to trigger autophagy. Also activates autophagy by promoting recruitment of STX17 to autophagosomes. In collaboration with ATG8 proteins, regulate lysosomal biogenesis, a fundamental process for any autophagic pathway, by promoting TFEB dephosphorylation. Also modulates autophagy by assisting with autophagosome formation and preventing lysosomal deacidification. While activating autophagy, acts as a key negative regulator of the inflammatory and interferon responses both by (1) promoting mitophagy and (2) mediating autophagy-dependent degradation of effectors of the inflammatory response. Promotes degradation of damaged and IFNG/IFN-gamma-stressed mitochondria via mitophagy, preventing cytosolic release of ligands that activate inflammation. Acts as a suppressor of inflammation by promoting recruitment of inflammation effectors, such as CGAS, RIGI/RIG-I and NLRP3, to autophagosome membranes, leading to their SQSTM1/p62-dependent autophagic degradation. Also directly inhibits assembly of the NLRP3 inflammasome by preventing the association between NLRP3 and PYCARD. Acts as a negative regulator of antiviral innate immune response by suppressing the RIPK2-dependent pro-inflammatory response: mediates recruitment of RIPosomes, composed of RIPK2 and NOD1 or NOD2, to autophagosome membranes, promoting their SQSTM1/p62-dependent autophagic degradation. Acts as a positive regulator of mitophagy in response to intracellular mycobacteria infection: specifically binds cardiolipin, leading to its translocation to mitochondria, where it promotes affected mitochondrial fission and mitophagy. In terms of biological role, (Microbial infection) Following infection by hepatitis C virus (HCV), promotes HCV-triggered membrane remodeling, leading to autophagy and Golgi fragmentation, a step required for HCV replication. This is Immunity-related GTPase family M protein from Homo sapiens (Human).